Here is a 196-residue protein sequence, read N- to C-terminus: tRNA (pseudouridine(54)-N(1))-methyltransferase (196 aa).

Leu-126 contributes to the S-adenosyl-L-methionine binding site.

The protein belongs to the methyltransferase superfamily. TrmY family. In terms of assembly, homodimer.

Its subcellular location is the cytoplasm. It carries out the reaction pseudouridine(54) in tRNA + S-adenosyl-L-methionine = N(1)-methylpseudouridine(54) in tRNA + S-adenosyl-L-homocysteine + H(+). Specifically catalyzes the N1-methylation of pseudouridine at position 54 (Psi54) in tRNAs. The chain is tRNA (pseudouridine(54)-N(1))-methyltransferase from Halobacterium salinarum (strain ATCC 700922 / JCM 11081 / NRC-1) (Halobacterium halobium).